We begin with the raw amino-acid sequence, 1028 residues long: Golgin subfamily A member 2 (1028 aa).

A disordered region spans residues 1–112; sequence MADQNRQIKL…NRPLSSTESL (112 aa). Basic and acidic residues predominate over residues 40–60; it reads KGDQTDAPADRRSPENERVDV. Residues 74-87 show a composition bias toward polar residues; it reads NPASAINTDNSAPQ. Coiled coils occupy residues 162-200, 233-388, 414-690, 738-769, and 799-840; these read NTQL…EQGA, ARQK…YAVQ, RDST…LLNG, LSRV…LTAL, and HEAL…LSGE. Residues 259 to 280 form a disordered region; that stretch reads RTLSSVSTQQKQHERHNKELEK. Positions 756–791 are disordered; sequence RRIHQDTRQQLTALSHDHHHHHHHEPHSTCAETDGS. The interval 944–981 is disordered; it reads AMDVSSSPQSSTAEIQSQSSERPAADPISSPSLRPQED. Polar residues predominate over residues 945-964; the sequence is MDVSSSPQSSTAEIQSQSSE.

It belongs to the GOLGA2 family.

Its subcellular location is the golgi apparatus. It localises to the cis-Golgi network membrane. The protein resides in the endoplasmic reticulum-Golgi intermediate compartment membrane. It is found in the cytoplasm. The protein localises to the cytoskeleton. Its subcellular location is the spindle pole. In terms of biological role, peripheral membrane component of the cis-Golgi stack that acts as a membrane skeleton that maintains the structure of the Golgi apparatus, and as a vesicle thether that facilitates vesicle fusion to the Golgi membrane. Required for normal protein transport from the endoplasmic reticulum to the Golgi apparatus and the cell membrane. Plays a central role in mitotic Golgi disassembly. Also plays a key role in spindle pole assembly and centrosome organization. It probably promotes mitotic spindle pole assembly by activating assembly factors to nucleate microtubules around the Golgi and capture them to couple mitotic membranes to the spindle. Also required for the Golgi ribbon formation and glycosylation of membrane and secretory proteins. In Danio rerio (Zebrafish), this protein is Golgin subfamily A member 2.